Here is a 325-residue protein sequence, read N- to C-terminus: MSEQSKDLSDPNFAAEVPDCEMQDSDAVPVGIPPPASLAANLAGPPCAPEGPMAAQQASPPPEERIEDVDPKILQQAAEEGRAHQPQSPARPIPAPPAPAQLVQKAHELMWYVLVKDQKRMVLWFPDMVKEVMGSYKKWCRSILRRTSVILARVFGLHLRLTNLHTMEFALVKALSPEELDRVALNNRMPMTGLLLMILSLIYVKGRGAREGAVWNVLRILGLRPWKKHSTFGDVRKIITEEFVQQNYLKYQRVPHIEPPEYEFFWGSRANREITKMQIMEFLARVFKKDPQAWPSRYREALEQARALREANLAAQAPRSSVSED.

2 disordered regions span residues 1–69 (MSEQ…IEDV) and 77–96 (AAEEGRAHQPQSPARPIPAP). The MAGE domain occupies 102–301 (LVQKAHELMW…QAWPSRYREA (200 aa)).

In terms of assembly, binds to the transactivation domains of E2F1 and p53. Binds also SV40 large T antigen and adenovirus E1A. Interacts with nucleobindin 1 and 2. In terms of tissue distribution, brain specific. Not detected in other tissues. Expressed in postmitotic neurons. In adult brain the highest expression is in hypothalamus. Highly expressed in thalamus and midbrain. Relatively low levels are in cerebral cortex, hippocampus, striatum, olfactory bulb, cerebellum, pons and spinal cord. Also detected in neurally differentiated embryonal carcinoma cells.

Its subcellular location is the cytoplasm. The protein resides in the nucleus. It is found in the nucleoplasm. It localises to the nucleus matrix. Growth suppressor that facilitates the entry of the cell into cell cycle arrest. Functionally similar to the retinoblastoma protein it binds to and represses the activity of cell-cycle-promoting proteins such as SV40 large T antigen, adenovirus E1A, and the transcription factor E2F. Necdin also interacts with p53 and works in an additive manner to inhibit cell growth. Also functions as a transcription factor and directly binds to specific guanosine-rich DNA sequences. This Mus musculus (Mouse) protein is Necdin (Ndn).